The chain runs to 304 residues: Acetyl-coenzyme A carboxylase carboxyl transferase subunit beta (304 aa).

A CoA carboxyltransferase N-terminal domain is found at 25 to 294 (VWTKCDSCGQ…PSVVESKADT (270 aa)). Positions 29, 32, 48, and 51 each coordinate Zn(2+). A C4-type zinc finger spans residues 29–51 (CDSCGQVLYRAELERNLEVCPKC).

This sequence belongs to the AccD/PCCB family. Acetyl-CoA carboxylase is a heterohexamer composed of biotin carboxyl carrier protein (AccB), biotin carboxylase (AccC) and two subunits each of ACCase subunit alpha (AccA) and ACCase subunit beta (AccD). The cofactor is Zn(2+).

The protein localises to the cytoplasm. The catalysed reaction is N(6)-carboxybiotinyl-L-lysyl-[protein] + acetyl-CoA = N(6)-biotinyl-L-lysyl-[protein] + malonyl-CoA. It functions in the pathway lipid metabolism; malonyl-CoA biosynthesis; malonyl-CoA from acetyl-CoA: step 1/1. Component of the acetyl coenzyme A carboxylase (ACC) complex. Biotin carboxylase (BC) catalyzes the carboxylation of biotin on its carrier protein (BCCP) and then the CO(2) group is transferred by the transcarboxylase to acetyl-CoA to form malonyl-CoA. This chain is Acetyl-coenzyme A carboxylase carboxyl transferase subunit beta, found in Yersinia pestis (strain Pestoides F).